Consider the following 391-residue polypeptide: Ferrochelatase (391 aa).

Fe cation-binding residues include histidine 196 and glutamate 281.

Belongs to the ferrochelatase family.

It localises to the cytoplasm. The catalysed reaction is heme b + 2 H(+) = protoporphyrin IX + Fe(2+). The protein operates within porphyrin-containing compound metabolism; protoheme biosynthesis; protoheme from protoporphyrin-IX: step 1/1. Its function is as follows. Catalyzes the ferrous insertion into protoporphyrin IX. The protein is Ferrochelatase of Synechococcus sp. (strain CC9605).